The primary structure comprises 369 residues: 2-aminoethylphosphonate--pyruvate transaminase 1 (369 aa).

An N6-(pyridoxal phosphate)lysine modification is found at K191.

The protein belongs to the class-V pyridoxal-phosphate-dependent aminotransferase family. PhnW subfamily. Homodimer. Requires pyridoxal 5'-phosphate as cofactor.

It catalyses the reaction (2-aminoethyl)phosphonate + pyruvate = phosphonoacetaldehyde + L-alanine. Involved in phosphonate degradation. This Burkholderia lata (strain ATCC 17760 / DSM 23089 / LMG 22485 / NCIMB 9086 / R18194 / 383) protein is 2-aminoethylphosphonate--pyruvate transaminase 1.